The following is a 68-amino-acid chain: Large ribosomal subunit protein uL29 (68 aa).

The protein belongs to the universal ribosomal protein uL29 family.

The polypeptide is Large ribosomal subunit protein uL29 (Rhodopseudomonas palustris (strain BisB18)).